A 384-amino-acid polypeptide reads, in one-letter code: F-box A protein 224 (384 aa).

The F-box domain occupies 71–122 (PKSLSDFPIGVMYDVLGHVDPFERLVLRKVSRNLRDVVQKMRCELDALYVNK).

This sequence belongs to the FTH family.

The sequence is that of F-box A protein 224 (fbxa-224) from Caenorhabditis elegans.